We begin with the raw amino-acid sequence, 317 residues long: tRNA dimethylallyltransferase (317 aa).

Position 14–21 (14–21 (GPTAVGKT)) interacts with ATP. A substrate-binding site is contributed by 16–21 (TAVGKT). The segment at 39–42 (DSMQ) is interaction with substrate tRNA.

This sequence belongs to the IPP transferase family. In terms of assembly, monomer. Mg(2+) is required as a cofactor.

The enzyme catalyses adenosine(37) in tRNA + dimethylallyl diphosphate = N(6)-dimethylallyladenosine(37) in tRNA + diphosphate. In terms of biological role, catalyzes the transfer of a dimethylallyl group onto the adenine at position 37 in tRNAs that read codons beginning with uridine, leading to the formation of N6-(dimethylallyl)adenosine (i(6)A). The sequence is that of tRNA dimethylallyltransferase from Bacillus cereus (strain B4264).